A 140-amino-acid chain; its full sequence is Large ribosomal subunit protein bL34m (140 aa).

It belongs to the bacterial ribosomal protein bL34 family. Component of the mitochondrial large ribosomal subunit (mt-LSU). Mature N.crassa 74S mitochondrial ribosomes consist of a small (37S) and a large (54S) subunit. The 37S small subunit contains a 16S ribosomal RNA (16S mt-rRNA) and 32 different proteins. The 54S large subunit contains a 23S rRNA (23S mt-rRNA) and 42 different proteins.

It is found in the mitochondrion. Component of the mitochondrial ribosome (mitoribosome), a dedicated translation machinery responsible for the synthesis of mitochondrial genome-encoded proteins, including at least some of the essential transmembrane subunits of the mitochondrial respiratory chain. The mitoribosomes are attached to the mitochondrial inner membrane and translation products are cotranslationally integrated into the membrane. In Neurospora crassa (strain ATCC 24698 / 74-OR23-1A / CBS 708.71 / DSM 1257 / FGSC 987), this protein is Large ribosomal subunit protein bL34m (mrpl34).